A 150-amino-acid chain; its full sequence is Deoxyuridine 5'-triphosphate nucleotidohydrolase (150 aa).

Substrate contacts are provided by residues 70–72, N83, and 87–89; these read RSG and TID.

Belongs to the dUTPase family. Requires Mg(2+) as cofactor.

It catalyses the reaction dUTP + H2O = dUMP + diphosphate + H(+). Its pathway is pyrimidine metabolism; dUMP biosynthesis; dUMP from dCTP (dUTP route): step 2/2. This enzyme is involved in nucleotide metabolism: it produces dUMP, the immediate precursor of thymidine nucleotides and it decreases the intracellular concentration of dUTP so that uracil cannot be incorporated into DNA. This Desulfotalea psychrophila (strain LSv54 / DSM 12343) protein is Deoxyuridine 5'-triphosphate nucleotidohydrolase.